Reading from the N-terminus, the 197-residue chain is ADP-ribosylation factor-like protein 6-interacting protein 1 (197 aa).

A run of 4 helical transmembrane segments spans residues 43 to 63 (VVFG…LSLI), 64 to 84 (TLLS…PMVS), 129 to 149 (TVFV…GAII), and 150 to 170 (NNLL…GLQN).

It belongs to the ARL6ip family.

The protein localises to the membrane. This Drosophila melanogaster (Fruit fly) protein is ADP-ribosylation factor-like protein 6-interacting protein 1.